A 150-amino-acid polypeptide reads, in one-letter code: D-aminoacyl-tRNA deacylase (150 aa).

The short motif at 138–139 is the Gly-cisPro motif, important for rejection of L-amino acids element; the sequence is GP.

This sequence belongs to the DTD family. As to quaternary structure, homodimer.

It localises to the cytoplasm. The catalysed reaction is glycyl-tRNA(Ala) + H2O = tRNA(Ala) + glycine + H(+). The enzyme catalyses a D-aminoacyl-tRNA + H2O = a tRNA + a D-alpha-amino acid + H(+). Functionally, an aminoacyl-tRNA editing enzyme that deacylates mischarged D-aminoacyl-tRNAs. Also deacylates mischarged glycyl-tRNA(Ala), protecting cells against glycine mischarging by AlaRS. Acts via tRNA-based rather than protein-based catalysis; rejects L-amino acids rather than detecting D-amino acids in the active site. By recycling D-aminoacyl-tRNA to D-amino acids and free tRNA molecules, this enzyme counteracts the toxicity associated with the formation of D-aminoacyl-tRNA entities in vivo and helps enforce protein L-homochirality. The sequence is that of D-aminoacyl-tRNA deacylase from Porphyromonas gingivalis (strain ATCC 33277 / DSM 20709 / CIP 103683 / JCM 12257 / NCTC 11834 / 2561).